A 282-amino-acid polypeptide reads, in one-letter code: NH(3)-dependent NAD(+) synthetase (282 aa).

51-58 (GISGGVDS) lines the ATP pocket. Asp57 provides a ligand contact to Mg(2+). Arg148 is a binding site for deamido-NAD(+). ATP is bound at residue Thr168. Glu173 is a Mg(2+) binding site. Deamido-NAD(+) contacts are provided by Lys181 and Asp188. ATP contacts are provided by Lys197 and Thr219. Position 268–269 (268–269 (HK)) interacts with deamido-NAD(+).

Belongs to the NAD synthetase family. In terms of assembly, homodimer.

The enzyme catalyses deamido-NAD(+) + NH4(+) + ATP = AMP + diphosphate + NAD(+) + H(+). The protein operates within cofactor biosynthesis; NAD(+) biosynthesis; NAD(+) from deamido-NAD(+) (ammonia route): step 1/1. Its function is as follows. Catalyzes the ATP-dependent amidation of deamido-NAD to form NAD. Uses ammonia as a nitrogen source. This chain is NH(3)-dependent NAD(+) synthetase, found in Burkholderia cenocepacia (strain ATCC BAA-245 / DSM 16553 / LMG 16656 / NCTC 13227 / J2315 / CF5610) (Burkholderia cepacia (strain J2315)).